The following is a 205-amino-acid chain: MSSEKSTSIEKLTKYYSLQVVSQERLYNFLPKINILGSDKVCCDFIHSLIDQICGKIISFDRFINDENQRIIYQLIRVYTLFINKVVGKDLKKEFICEDLKTSNVDNIYITAISDCIISRFQDIKKELTEKLSTISSSSLSDFDWKMNAILSSDRINIVQENVLLLNLTIETNINDKKEQVLIELSKKELDHILETFDQINEVSF.

One can recognise a COMM domain in the interval 139–205 (SLSDFDWKMN…TFDQINEVSF (67 aa)).

This sequence belongs to the COMM domain-containing protein 8 family. In terms of assembly, component of the commander complex consisting of the CCC subcomplex and the retriever subcomplex. Component of the CCC subcomplex.

Scaffold protein in the commander complex that is essential for endosomal recycling of transmembrane cargos; the commander complex is composed of the CCC subcomplex and the retriever subcomplex. The chain is COMM domain-containing protein 8 (commd8) from Dictyostelium discoideum (Social amoeba).